Reading from the N-terminus, the 1516-residue chain is Neurite extension and migration factor (1516 aa).

Residues 380–405 (LDKKKGKEEGQEDKGVEKKDGKDNGE) are compositionally biased toward basic and acidic residues. Disordered stretches follow at residues 380–440 (LDKK…GSFS), 589–610 (QKKK…SQKQ), 1158–1225 (TFND…STKK), 1373–1419 (TPQE…PGYN), and 1437–1479 (LGNN…ESGT). 3 stretches are compositionally biased toward polar residues: residues 596–610 (NTNT…SQKQ), 1158–1170 (TFND…STNN), and 1185–1194 (GAMNQSSSQK). Residues 1443 to 1453 (THKKLYRHKSS) show a composition bias toward basic residues. Basic and acidic residues predominate over residues 1456-1479 (ALRDEKCKGKHMEREQVHKDESGT).

Highly expressed in fetal and adult brain, predominantly in the cerebral cortex and the cerebellum. Also expressed in other tissues but to a lesser extent.

It is found in the nucleus. It localises to the cytoplasm. Functionally, involved in neurite outgrowth by regulating cell-cell adhesion via the N-cadherin signaling pathway. May act by regulating expression of protein-coding genes, such as N-cadherins and integrin beta-1 (ITGB1). The sequence is that of Neurite extension and migration factor from Homo sapiens (Human).